Consider the following 444-residue polypeptide: Platelet-activating factor acetylhydrolase (444 aa).

Positions 1–21 (MLPPKLHALFCLCSCLTLVHP) are cleaved as a signal peptide. N-linked (GlcNAc...) asparagine glycans are attached at residues Asn60 and Asn200. Ser274 functions as the Nucleophile in the catalytic mechanism. Catalysis depends on charge relay system residues Asp297 and His352. Asn424 is a glycosylation site (N-linked (GlcNAc...) asparagine).

The protein belongs to the AB hydrolase superfamily. Lipase family. In terms of processing, N-glycosylated. Plasma.

It localises to the secreted. The protein localises to the extracellular space. The catalysed reaction is a 1-O-alkyl-2-acetyl-sn-glycero-3-phosphocholine + H2O = a 1-O-alkyl-sn-glycero-3-phosphocholine + acetate + H(+). The enzyme catalyses 1-O-decyl-2-acetyl-sn-glycero-3-phosphocholine + H2O = 1-O-decyl-sn-glycero-3-phosphocholine + acetate + H(+). It carries out the reaction 1-O-dodecyl-2-acetyl-sn-glycero-3-phosphocholine + H2O = 1-O-dodecyl-sn-glycero-3-phosphocholine + acetate + H(+). It catalyses the reaction 1-O-tetradecyl-2-acetyl-sn-glycero-3-phosphocholine + H2O = 1-O-tetradecyl-sn-glycero-3-phosphocholine + acetate + H(+). The catalysed reaction is 1-O-hexadecyl-2-acetyl-sn-glycero-3-phosphocholine + H2O = 1-O-hexadecyl-sn-glycero-3-phosphocholine + acetate + H(+). The enzyme catalyses 1-O-octadecyl-2-acetyl-sn-glycero-3-phosphocholine + H2O = 1-O-octadecyl-sn-glycero-3-phosphocholine + acetate + H(+). It carries out the reaction 1-hexadecanoyl-2-acetyl-sn-glycero-3-phosphocholine + H2O = 1-hexadecanoyl-sn-glycero-3-phosphocholine + acetate + H(+). It catalyses the reaction 1-hexadecanoyl-2-propionyl-sn-glycero-3-phosphocholine + H2O = propanoate + 1-hexadecanoyl-sn-glycero-3-phosphocholine + H(+). The catalysed reaction is 1-hexadecanoyl-2-butanoyl-sn-glycero-3-phosphocholine + H2O = butanoate + 1-hexadecanoyl-sn-glycero-3-phosphocholine + H(+). The enzyme catalyses 1-hexadecanoyl-2-pentanoyl-sn-glycero-3-phosphocholine + H2O = pentanoate + 1-hexadecanoyl-sn-glycero-3-phosphocholine + H(+). It carries out the reaction 1-hexadecanoyl-2-glutaroyl-sn-glycero-3-phosphocholine + H2O = glutarate + 1-hexadecanoyl-sn-glycero-3-phosphocholine + H(+). It catalyses the reaction 1-hexadecanoyl-2-(5-oxopentanoyl)-sn-glycero-3-phosphocholine + H2O = 5-oxopentanoate + 1-hexadecanoyl-sn-glycero-3-phosphocholine + H(+). The catalysed reaction is 1-hexadecanoyl-2-(9-oxononanoyl)-sn-glycero-3-phosphocholine + H2O = 9-oxononanoate + 1-hexadecanoyl-sn-glycero-3-phosphocholine + H(+). The enzyme catalyses 1-hexadecanoyl-2-[9-hydroperoxy-(10E-octadecenoyl)]-sn-glycero-3-phosphocholine + H2O = 9-hydroperoxy-10E-octadecenoate + 1-hexadecanoyl-sn-glycero-3-phosphocholine + H(+). It carries out the reaction 1-hexadecanoyl-2-(10-hydroperoxy-8E-octadecenoyl)-sn-glycero-3-phosphocholine + H2O = 10-hydroperoxy-(8E)-octadecenoate + 1-hexadecanoyl-sn-glycero-3-phosphocholine + H(+). In terms of biological role, lipoprotein-associated calcium-independent phospholipase A2 involved in phospholipid catabolism during inflammatory and oxidative stress response. At the lipid-aqueous interface, hydrolyzes the ester bond of fatty acyl group attached at sn-2 position of phospholipids (phospholipase A2 activity). Specifically targets phospholipids with a short-chain fatty acyl group at sn-2 position. Can hydrolyze phospholipids with long fatty acyl chains, only if they carry oxidized functional groups. Hydrolyzes and inactivates platelet-activating factor (PAF, 1-O-alkyl-2-acetyl-sn-glycero-3-phosphocholine), a potent pro-inflammatory signaling lipid that acts through PTAFR on various innate immune cells. Hydrolyzes oxidatively truncated phospholipids carrying an aldehyde group at omega position, preventing their accumulation in low-density lipoprotein (LDL) particles and uncontrolled pro-inflammatory effects. As part of high-density lipoprotein (HDL) particles, can hydrolyze phospholipids having long-chain fatty acyl hydroperoxides at sn-2 position and protect against potential accumulation of these oxylipins in the vascular wall. Catalyzes the release from membrane phospholipids of F2-isoprostanes, lipid biomarkers of cellular oxidative damage. This chain is Platelet-activating factor acetylhydrolase (PLA2G7), found in Canis lupus familiaris (Dog).